A 302-amino-acid chain; its full sequence is Probable lipid kinase YegS-like (302 aa).

The 129-residue stretch at 1-129 (MDKDKVLLVL…IDLGAVNGKL (129 aa)) folds into the DAGKc domain. Residues threonine 39, 65 to 71 (GDGTLRE), and threonine 92 each bind ATP. 3 residues coordinate Mg(2+): arginine 210, aspartate 213, and leucine 215. The active-site Proton acceptor is glutamate 268.

This sequence belongs to the diacylglycerol/lipid kinase family. YegS lipid kinase subfamily. Mg(2+) is required as a cofactor. It depends on Ca(2+) as a cofactor.

The protein localises to the cytoplasm. Probably phosphorylates lipids; the in vivo substrate is unknown. This chain is Probable lipid kinase YegS-like, found in Pseudomonas aeruginosa (strain UCBPP-PA14).